The chain runs to 87 residues: Large ribosomal subunit protein bL27 (87 aa).

Belongs to the bacterial ribosomal protein bL27 family.

This Stenotrophomonas maltophilia (strain R551-3) protein is Large ribosomal subunit protein bL27.